The primary structure comprises 488 residues: V-type proton ATPase subunit B 1 (488 aa).

The protein belongs to the ATPase alpha/beta chains family. In terms of assembly, V-ATPase is a heteromultimeric enzyme composed of a peripheral catalytic V1 complex (main components: subunits A, B, C, D, E, and F) attached to an integral membrane V0 proton pore complex (main component: the proteolipid protein).

Non-catalytic subunit of the peripheral V1 complex of vacuolar ATPase. V-ATPase is responsible for acidifying a variety of intracellular compartments in eukaryotic cells. This Gossypium hirsutum (Upland cotton) protein is V-type proton ATPase subunit B 1.